The sequence spans 259 residues: Troponin T, fast skeletal muscle (259 aa).

The span at 1–36 (MSDEETEQVEEQYEEEEEAQEEEVQEEAPEPEEVQE) shows a compositional bias: acidic residues. A disordered region spans residues 1–62 (MSDEETEQVE…EKVDFDDIQK (62 aa)). The residue at position 2 (Ser2) is an N-acetylserine. Ser2 carries the post-translational modification Phosphoserine. The span at 50-62 (PEGEKVDFDDIQK) shows a compositional bias: basic and acidic residues. Residue Ser78 is modified to Phosphoserine. A compositionally biased stretch (basic and acidic residues) spans 101-143 (RAERAEQQRIRAEKERERQNRLAEEKARREEEDAKRRAEDDLK). Residues 101-180 (RAERAEQQRI…TAREMKKKIL (80 aa)) are disordered. Ser149, Ser156, and Ser157 each carry phosphoserine. Basic and acidic residues predominate over residues 171–180 (TAREMKKKIL). Ser193 bears the Phosphoserine mark. Residue Tyr209 is modified to Phosphotyrosine. A disordered region spans residues 235-259 (RIDQAQKHSKKAGATAKGKVGGRWK).

Belongs to the troponin T family.

In terms of biological role, troponin T is the tropomyosin-binding subunit of troponin, the thin filament regulatory complex which confers calcium-sensitivity to striated muscle actomyosin ATPase activity. This Rattus norvegicus (Rat) protein is Troponin T, fast skeletal muscle (Tnnt3).